A 475-amino-acid chain; its full sequence is 3-isopropylmalate dehydratase large subunit (475 aa).

Cysteine 352, cysteine 413, and cysteine 416 together coordinate [4Fe-4S] cluster.

It belongs to the aconitase/IPM isomerase family. LeuC type 1 subfamily. Heterodimer of LeuC and LeuD. [4Fe-4S] cluster serves as cofactor.

The enzyme catalyses (2R,3S)-3-isopropylmalate = (2S)-2-isopropylmalate. It functions in the pathway amino-acid biosynthesis; L-leucine biosynthesis; L-leucine from 3-methyl-2-oxobutanoate: step 2/4. Catalyzes the isomerization between 2-isopropylmalate and 3-isopropylmalate, via the formation of 2-isopropylmaleate. In Pseudomonas syringae pv. tomato (strain ATCC BAA-871 / DC3000), this protein is 3-isopropylmalate dehydratase large subunit.